The following is a 66-amino-acid chain: MPKLKTKSGAKKRFKITATGKVIYAQSGKRHGMIKRTNKQIRNLRGTNVMFKSDGDKIIRFFLPNG.

Belongs to the bacterial ribosomal protein bL35 family.

This is Large ribosomal subunit protein bL35 from Beijerinckia indica subsp. indica (strain ATCC 9039 / DSM 1715 / NCIMB 8712).